The sequence spans 316 residues: Ornithine carbamoyltransferase (316 aa).

Carbamoyl phosphate-binding positions include 57–60 (STRT), Gln-84, Arg-108, and 135–138 (HPCQ). Residues Asn-166, Asp-230, and 234–235 (SM) contribute to the L-ornithine site. Residues 269–270 (CL) and Arg-297 each bind carbamoyl phosphate.

This sequence belongs to the aspartate/ornithine carbamoyltransferase superfamily. OTCase family.

The protein resides in the cytoplasm. The enzyme catalyses carbamoyl phosphate + L-ornithine = L-citrulline + phosphate + H(+). Its pathway is amino-acid biosynthesis; L-arginine biosynthesis; L-arginine from L-ornithine and carbamoyl phosphate: step 1/3. Functionally, reversibly catalyzes the transfer of the carbamoyl group from carbamoyl phosphate (CP) to the N(epsilon) atom of ornithine (ORN) to produce L-citrulline. This Bacillus cereus (strain ZK / E33L) protein is Ornithine carbamoyltransferase.